A 112-amino-acid polypeptide reads, in one-letter code: Seminal vesicle secretory protein 4 (112 aa).

The signal sequence occupies residues 1–21 (MKSTSLFLCSLLLLLVTGAIG). The interval 26-112 (EKYSQSEEVV…RSRFAQDVLN (87 aa)) is disordered. Composition is skewed to low complexity over residues 36–47 (SESFASGPSSGS) and 85–97 (RSSGGSNMEGESS).

This sequence belongs to the SVP2/SVP5/SVP6 family. As to expression, testis.

It localises to the secreted. The protein localises to the extracellular space. The chain is Seminal vesicle secretory protein 4 (Svs4) from Rattus norvegicus (Rat).